A 251-amino-acid polypeptide reads, in one-letter code: Maleate isomerase (251 aa).

Substrate is bound by residues Asn-14, 76-78 (CLV), Tyr-133, and Asn-163. The active-site Nucleophile is the Cys-76. Cys-76 is subject to S-(2-succinyl)cysteine. The active-site Proton donor is the Cys-194. 195–196 (VQ) lines the substrate pocket.

It belongs to the maleate isomerase family. In terms of assembly, homodimer.

It carries out the reaction maleate = fumarate. Its function is as follows. Catalyzes cis-trans isomerization of the C2-C3 double bond in maleate to yield fumarate. Shows a strict specificity for maleate, with no activity detected toward structurally related substrates including citraconate, mesaconate, dimethylmaleate, and maleamide. The sequence is that of Maleate isomerase from Nocardia farcinica (strain IFM 10152).